A 93-amino-acid polypeptide reads, in one-letter code: uncharacterized protein (93 aa).

Positions 24-85 (QLQVGDTLKL…IQTQVGRLFF (62 aa)) constitute a TRAM domain.

It belongs to the ycf81 family.

This is an uncharacterized protein from Thermus thermophilus.